The sequence spans 129 residues: Large ribosomal subunit protein bL12 (129 aa).

This sequence belongs to the bacterial ribosomal protein bL12 family. As to quaternary structure, homodimer. Part of the ribosomal stalk of the 50S ribosomal subunit. Forms a multimeric L10(L12)X complex, where L10 forms an elongated spine to which 2 to 4 L12 dimers bind in a sequential fashion. Binds GTP-bound translation factors.

In terms of biological role, forms part of the ribosomal stalk which helps the ribosome interact with GTP-bound translation factors. Is thus essential for accurate translation. This is Large ribosomal subunit protein bL12 from Protochlamydia amoebophila (strain UWE25).